The primary structure comprises 112 residues: Large ribosomal subunit protein mL53 (112 aa).

It belongs to the mitochondrion-specific ribosomal protein mL53 family. Component of the mitochondrial ribosome large subunit (39S) which comprises a 16S rRNA and about 50 distinct proteins.

It is found in the mitochondrion. This Pongo abelii (Sumatran orangutan) protein is Large ribosomal subunit protein mL53 (MRPL53).